A 161-amino-acid chain; its full sequence is Endoribonuclease YbeY (161 aa).

Residues His120, His124, and Asp130 each coordinate Zn(2+).

Belongs to the endoribonuclease YbeY family. Zn(2+) is required as a cofactor.

It is found in the cytoplasm. Its function is as follows. Single strand-specific metallo-endoribonuclease involved in late-stage 70S ribosome quality control and in maturation of the 3' terminus of the 16S rRNA. In Chlamydia trachomatis serovar L2 (strain ATCC VR-902B / DSM 19102 / 434/Bu), this protein is Endoribonuclease YbeY.